A 282-amino-acid polypeptide reads, in one-letter code: MLLAVPSKGRLQEPTLKLLEAVGIKPLASDERALVLPTSWPDVNLIKARPEDIPYLVESGRVWAGVTGHDYVLESGSNVVEALDLEFGRGRLVVAVPKSSGIKSVEELPPGARVATKFVNIAYNYFAELGKRVRVVKVTGSVEVLPQLGIADAILDVMATGTTLEVHGLTPIATVLETSARLVVHPEYTSHELTKKLVTFIKGYFAAQGKKMIFLNVPAARLEAVLSVLPAMEAPSVTKLAKGDIYEVFSVVSEDVLPDLVMKLKNAGAKDIVVTSIEKLIS.

It belongs to the ATP phosphoribosyltransferase family. Long subfamily. The cofactor is Mg(2+).

It is found in the cytoplasm. It catalyses the reaction 1-(5-phospho-beta-D-ribosyl)-ATP + diphosphate = 5-phospho-alpha-D-ribose 1-diphosphate + ATP. It participates in amino-acid biosynthesis; L-histidine biosynthesis; L-histidine from 5-phospho-alpha-D-ribose 1-diphosphate: step 1/9. With respect to regulation, feedback inhibited by histidine. Its function is as follows. Catalyzes the condensation of ATP and 5-phosphoribose 1-diphosphate to form N'-(5'-phosphoribosyl)-ATP (PR-ATP). Has a crucial role in the pathway because the rate of histidine biosynthesis seems to be controlled primarily by regulation of HisG enzymatic activity. The protein is ATP phosphoribosyltransferase of Pyrobaculum neutrophilum (strain DSM 2338 / JCM 9278 / NBRC 100436 / V24Sta) (Thermoproteus neutrophilus).